A 292-amino-acid polypeptide reads, in one-letter code: MLYIIKPFLQKLRYLLQLLLTQIVGWSAECHGSWFTRIIIKLFILFYKVNMQESLQQDIAFYKTFNAFFIRYLNKNARPINSNPSVIVQPADGIISQLGTIQDHLILQAKKHFYSLEALLAGQTRIINYFRCGNFTTIYLSPRDYHRVHMPCNGVLRQMIYVPGNLFSVNPSMVTHVPNLFARNERVICLFDSNFGLIAQILVGATIVGSIATIWSGTVMPPREKVIKCWHYPKFGDKNAVILLKGQEMGYFKLGSTVINLFRYGRIELCDHLYTNCITRVGLPLGYSNKKI.

Residues D92, H149, and S256 each act as charge relay system; for autoendoproteolytic cleavage activity in the active site. The active-site Schiff-base intermediate with substrate; via pyruvic acid; for decarboxylase activity is S256. S256 bears the Pyruvic acid (Ser); by autocatalysis mark.

The protein belongs to the phosphatidylserine decarboxylase family. PSD-B subfamily. Prokaryotic type I sub-subfamily. As to quaternary structure, heterodimer of a large membrane-associated beta subunit and a small pyruvoyl-containing alpha subunit. Pyruvate is required as a cofactor. Is synthesized initially as an inactive proenzyme. Formation of the active enzyme involves a self-maturation process in which the active site pyruvoyl group is generated from an internal serine residue via an autocatalytic post-translational modification. Two non-identical subunits are generated from the proenzyme in this reaction, and the pyruvate is formed at the N-terminus of the alpha chain, which is derived from the carboxyl end of the proenzyme. The autoendoproteolytic cleavage occurs by a canonical serine protease mechanism, in which the side chain hydroxyl group of the serine supplies its oxygen atom to form the C-terminus of the beta chain, while the remainder of the serine residue undergoes an oxidative deamination to produce ammonia and the pyruvoyl prosthetic group on the alpha chain. During this reaction, the Ser that is part of the protease active site of the proenzyme becomes the pyruvoyl prosthetic group, which constitutes an essential element of the active site of the mature decarboxylase.

The protein resides in the cell membrane. The enzyme catalyses a 1,2-diacyl-sn-glycero-3-phospho-L-serine + H(+) = a 1,2-diacyl-sn-glycero-3-phosphoethanolamine + CO2. It participates in phospholipid metabolism; phosphatidylethanolamine biosynthesis; phosphatidylethanolamine from CDP-diacylglycerol: step 2/2. Catalyzes the formation of phosphatidylethanolamine (PtdEtn) from phosphatidylserine (PtdSer). This Baumannia cicadellinicola subsp. Homalodisca coagulata protein is Phosphatidylserine decarboxylase proenzyme.